Here is a 138-residue protein sequence, read N- to C-terminus: Small ribosomal subunit protein uS11 (138 aa).

Residues 1-12 are compositionally biased toward low complexity; the sequence is MPPKKANAAGPK. The segment at 1 to 23 is disordered; the sequence is MPPKKANAAGPKKGQKTRKREKK. Basic residues predominate over residues 13–22; it reads KGQKTRKREK.

This sequence belongs to the universal ribosomal protein uS11 family. In terms of assembly, part of the 30S ribosomal subunit. Interacts with proteins S7 and S18. Binds to IF-3.

Located on the platform of the 30S subunit, it bridges several disparate RNA helices of the 16S rRNA. Forms part of the Shine-Dalgarno cleft in the 70S ribosome. The polypeptide is Small ribosomal subunit protein uS11 (Mycobacterium leprae (strain Br4923)).